The primary structure comprises 517 residues: UDP-N-acetylmuramoyl-tripeptide--D-alanyl-D-alanine ligase (517 aa).

138 to 144 lines the ATP pocket; the sequence is GSSGKTS.

It belongs to the MurCDEF family. MurF subfamily.

Its subcellular location is the cytoplasm. It carries out the reaction D-alanyl-D-alanine + UDP-N-acetyl-alpha-D-muramoyl-L-alanyl-gamma-D-glutamyl-meso-2,6-diaminopimelate + ATP = UDP-N-acetyl-alpha-D-muramoyl-L-alanyl-gamma-D-glutamyl-meso-2,6-diaminopimeloyl-D-alanyl-D-alanine + ADP + phosphate + H(+). It participates in cell wall biogenesis; peptidoglycan biosynthesis. In terms of biological role, involved in cell wall formation. Catalyzes the final step in the synthesis of UDP-N-acetylmuramoyl-pentapeptide, the precursor of murein. The polypeptide is UDP-N-acetylmuramoyl-tripeptide--D-alanyl-D-alanine ligase (Mycobacterium leprae (strain TN)).